We begin with the raw amino-acid sequence, 621 residues long: Kelch-like protein 40 (621 aa).

A BTB domain is found at 33–98; that stretch reads LDCVVRVGER…LYTSEIALDE (66 aa). The region spanning 133–239 is the BACK domain; that stretch reads CLAVFRLGLL…PRAFLETRVE (107 aa). The disordered stretch occupies residues 265-298; it reads LTTLRKKKKEKGEQTARAKEANQGTEDTKAEDDE. Positions 274–284 are enriched in basic and acidic residues; sequence EKGEQTARAKE. Kelch repeat units lie at residues 360–412, 413–462, 463–510, 512–557, and 559–613; these read QVFV…EALN, AIYV…SHMD, LVYV…VHDG, IFVA…SLAG, and LYAL…PVRL.

It belongs to the KLHL40 family. Component of the BCR(KLHL40) E3 ubiquitin ligase complex, at least composed of CUL3, KLHL40 and RBX1. Interacts with LMOD3. Specifically expressed in skeletal muscles in embryonic, neonatal and adults. Expressed in various types of muscles, including extensor digitorum longus, gastrocnemius, soleus, diaphragm, masseter and heart (at protein level). Not detected in brain, liver and lung (at protein level).

The protein localises to the cytoplasm. The protein resides in the myofibril. Its subcellular location is the sarcomere. It is found in the a band. It localises to the i band. Substrate-specific adapter of a BCR (BTB-CUL3-RBX1) E3 ubiquitin ligase complex that acts as a key regulator of skeletal muscle development. The BCR(KLHL40) complex acts by mediating ubiquitination and degradation of TFDP1, thereby regulating the activity of the E2F:DP transcription factor complex. Promotes stabilization of LMOD3 by acting as a negative regulator of LMOD3 ubiquitination; the molecular process by which it negatively regulates ubiquitination of LMOD3 is however unclear. The protein is Kelch-like protein 40 of Mus musculus (Mouse).